A 271-amino-acid polypeptide reads, in one-letter code: Isoprenyl transferase (271 aa).

D35 is a catalytic residue. D35 serves as a coordination point for Mg(2+). Residues 36–39 (GNGR), W40, R48, H52, and 80–82 (STE) each bind substrate. The Proton acceptor role is filled by N83. Residues W84, R86, R207, and 213 to 215 (RIS) each bind substrate. E226 lines the Mg(2+) pocket.

This sequence belongs to the UPP synthase family. Homodimer. Mg(2+) serves as cofactor.

Its function is as follows. Catalyzes the condensation of isopentenyl diphosphate (IPP) with allylic pyrophosphates generating different type of terpenoids. The polypeptide is Isoprenyl transferase (Enterococcus faecalis (strain ATCC 700802 / V583)).